The primary structure comprises 178 residues: ATP-dependent protease subunit HslV (178 aa).

Residue T2 is part of the active site. G157, C160, and T163 together coordinate Na(+).

This sequence belongs to the peptidase T1B family. HslV subfamily. As to quaternary structure, a double ring-shaped homohexamer of HslV is capped on each side by a ring-shaped HslU homohexamer. The assembly of the HslU/HslV complex is dependent on binding of ATP.

Its subcellular location is the cytoplasm. The enzyme catalyses ATP-dependent cleavage of peptide bonds with broad specificity.. Its activity is regulated as follows. Allosterically activated by HslU binding. In terms of biological role, protease subunit of a proteasome-like degradation complex believed to be a general protein degrading machinery. The polypeptide is ATP-dependent protease subunit HslV (Hamiltonella defensa subsp. Acyrthosiphon pisum (strain 5AT)).